The chain runs to 348 residues: Small ribosomal subunit biogenesis GTPase RsgA (348 aa).

The CP-type G domain maps to arginine 72–proline 230. GTP contacts are provided by residues threonine 121–aspartate 124 and glycine 172–serine 180. Residues cysteine 255, cysteine 260, histidine 262, and cysteine 268 each contribute to the Zn(2+) site. The segment covering alanine 305–lysine 322 has biased composition (basic and acidic residues). Residues alanine 305–tryptophan 348 form a disordered region. A compositionally biased stretch (basic residues) spans lysine 323–histidine 333.

Belongs to the TRAFAC class YlqF/YawG GTPase family. RsgA subfamily. As to quaternary structure, monomer. Associates with 30S ribosomal subunit, binds 16S rRNA. It depends on Zn(2+) as a cofactor.

It is found in the cytoplasm. In terms of biological role, one of several proteins that assist in the late maturation steps of the functional core of the 30S ribosomal subunit. Helps release RbfA from mature subunits. May play a role in the assembly of ribosomal proteins into the subunit. Circularly permuted GTPase that catalyzes slow GTP hydrolysis, GTPase activity is stimulated by the 30S ribosomal subunit. This chain is Small ribosomal subunit biogenesis GTPase RsgA, found in Thermosynechococcus vestitus (strain NIES-2133 / IAM M-273 / BP-1).